Here is a 184-residue protein sequence, read N- to C-terminus: Interferon alpha-2 (184 aa).

A signal peptide spans 1 to 23 (MALPFSLLMALVVLSCHSSCSLG). 2 cysteine pairs are disulfide-bonded: cysteine 24–cysteine 122 and cysteine 52–cysteine 162.

It belongs to the alpha/beta interferon family. As to quaternary structure, interacts with IFNAR2.

Its subcellular location is the secreted. In terms of biological role, produced by macrophages, IFN-alpha have antiviral activities. This is Interferon alpha-2 from Equus caballus (Horse).